The sequence spans 562 residues: Urocanate hydratase (562 aa).

NAD(+) is bound by residues 52–53 (GG), Gln-130, 176–178 (GMG), Glu-196, Arg-201, 242–243 (NA), 263–267 (QTSAH), 273–274 (YL), and Tyr-322. Cys-410 is an active-site residue. Gly-492 is a binding site for NAD(+).

It belongs to the urocanase family. Requires NAD(+) as cofactor.

It is found in the cytoplasm. It carries out the reaction 4-imidazolone-5-propanoate = trans-urocanate + H2O. It participates in amino-acid degradation; L-histidine degradation into L-glutamate; N-formimidoyl-L-glutamate from L-histidine: step 2/3. Its function is as follows. Catalyzes the conversion of urocanate to 4-imidazolone-5-propionate. In Klebsiella pneumoniae subsp. pneumoniae (strain ATCC 700721 / MGH 78578), this protein is Urocanate hydratase.